The following is a 747-amino-acid chain: Kinesin-like protein KIF3B (747 aa).

Met1 bears the N-acetylmethionine mark. Ser2 is modified (N-acetylserine; in Kinesin-like protein KIF3B, N-terminally processed). The Kinesin motor domain maps to 9-340 (SVRVVVRCRP…LRYANRAKNI (332 aa)). 96–103 (GQTGTGKT) is an ATP binding site. A coiled-coil region spans residues 346–579 (VNEDPKDALL…EQTQNELTRE (234 aa)). Disordered regions lie at residues 374-412 (IGRRKRREKRREGGGSGGGGEEEEEEGEEGEEDGDDKDD) and 698-747 (IQVD…LVPK). The span at 393–411 (GEEEEEEGEEGEEDGDDKD) shows a compositional bias: acidic residues. The interval 580–747 (LKLKHLIIEN…YPQSRGLVPK (168 aa)) is globular. Polar residues predominate over residues 701–710 (DASSFESTAS). The span at 711–721 (RKPKARPKSGR) shows a compositional bias: basic residues. The span at 722 to 735 (KSGSSSSSSGNPAS) shows a compositional bias: low complexity.

It belongs to the TRAFAC class myosin-kinesin ATPase superfamily. Kinesin family. Kinesin II subfamily. In terms of assembly, heterodimer of KIF3A and KIF3B. KIF3A/KIF3B heterodimer interacts with KIFAP3 forming a heterotrimeric (KIF3A/KIF3B/KIFAP3) complex. Interacts with the SMC3 subunit of the cohesin complex. Interacts directly with IFT20. Interacts with FLCN.

Its subcellular location is the cytoplasm. The protein localises to the cytoskeleton. The protein resides in the cell projection. It is found in the cilium. It localises to the dendritic spine. In terms of biological role, microtubule-based molecular motor that transport intracellular cargos, such as vesicles, organelles and protein complexes. Uses ATP hydrolysis to generate force to bind and move along the microtubule. Plays a role in cilia formation. Involved in photoreceptor integrity and opsin trafficking in rod photoreceptors. Transports vesicles containing N-methyl-D-aspartate (NMDA) receptor subunit GRIN2A into neuronal dendrites. The protein is Kinesin-like protein KIF3B of Mus musculus (Mouse).